A 693-amino-acid polypeptide reads, in one-letter code: MAREYPLNKVRNFGIAAHIDAGKTTTTERILYYTGRTHKIGEVHEGAATMDWMEQEKERGITITSAATYCRWQDMQFNIIDTPGHVDFTAEVERSLRVLDGAVVVFDSGNGVEPQSETVWRQADKYGVPRIVFSNKMDKVGADFFMVVNDIEEKLGAKPIPVQIPIGAESSFQGIVDLVTMKAHIWSGEELGAKFDITDVPKELEEKAHAARSEMIELIADYSDDIMNNFMEGKESTAVQIKQAIRNATLQIKLIPVLCGTAFKNKGVQPMLDAVCDYLPSPLDRKAFKGINPVTSETDSREVDDKAPFSALAFKIQADPYIGKLTYLRVYSGTLESGSYVYNPIKDAKERISRIVRMHSNNREEVKSVNTGDIAAAVGLKNTGTGDTLCDEEKPILLESMDFPVPVIDVAIEPKSKADEEKLGIALNRLSEEDPTFRVRTNEETNQTIIAGMGELHLEILVDRMKREFNVQANVGRPQVAYRETIRKVQEAESKYIRQTGGRGQYGHVVLTVEPQDPGKGYEFVNKIVGGVIPREYIPAIDKGIKEAMTSGTLAGYPVADVKVVVIDGSFHEVDSSEMAFKIAGSMAFKDACRKASPVILEPIMKTEVIVPEEYMGDVIGDLNSRRGKIVSMESKNKVQHIKANVPLAEMFGYSTTLRSLTQGRGNYSMEPSHYEEVPSQIADKILERTTRG.

In terms of domain architecture, tr-type G spans Asn-8 to Leu-283. GTP contacts are provided by residues Ala-17–Thr-24, Asp-81–His-85, and Asn-135–Asp-138.

It belongs to the TRAFAC class translation factor GTPase superfamily. Classic translation factor GTPase family. EF-G/EF-2 subfamily.

It localises to the cytoplasm. Functionally, catalyzes the GTP-dependent ribosomal translocation step during translation elongation. During this step, the ribosome changes from the pre-translocational (PRE) to the post-translocational (POST) state as the newly formed A-site-bound peptidyl-tRNA and P-site-bound deacylated tRNA move to the P and E sites, respectively. Catalyzes the coordinated movement of the two tRNA molecules, the mRNA and conformational changes in the ribosome. This chain is Elongation factor G, found in Endomicrobium trichonymphae.